Consider the following 194-residue polypeptide: MKLAREFYARDTREVARDLLGKVLVHRDGGVRRAARIVETEAYHGPDDLASHARFGPTRRAGIMFGPAGVAYVYLIYGTSHCMNVVTGAEGFPSAVLLRAGEPVEGCLHSTRGPGNLCRALAIRREHDNGRDLAGDDLFVEDAPPPRERIVAARRVNVDYAGPWAERPWRFALEGNAFVSRAPGEWRAVRGRRR.

Belongs to the DNA glycosylase MPG family.

In Anaeromyxobacter sp. (strain Fw109-5), this protein is Putative 3-methyladenine DNA glycosylase.